Reading from the N-terminus, the 1028-residue chain is Multidrug resistance protein MdtC (1028 aa).

Transmembrane regions (helical) follow at residues 3-23, 333-353, 360-380, 387-407, 431-451, 463-483, 528-548, 853-873, 875-895, 897-917, 953-973, and 984-1004; these read FFAL…AITL, EVEQ…FLFL, LIPA…MYLC, LSLM…IVVL, VGFT…PLLL, FAVT…TLTP, LVGV…ISIP, VILI…LYES, VHPL…LLAL, LFNA…IGIV, PIMM…ISGG, and ITIV…TPVV.

The protein belongs to the resistance-nodulation-cell division (RND) (TC 2.A.6) family. MdtC subfamily. As to quaternary structure, part of a tripartite efflux system composed of MdtA, MdtB and MdtC. MdtC forms a heteromultimer with MdtB.

It is found in the cell inner membrane. The protein is Multidrug resistance protein MdtC of Citrobacter koseri (strain ATCC BAA-895 / CDC 4225-83 / SGSC4696).